The primary structure comprises 629 residues: MPIKILSPQLANQIAAGEVVERPASVVKELVENSLDAGANKIQIDIENGGANLIRIRDNGCGIPKEELSLALARHATSKIADLDDLEAILSLGFRGEALASISSVSRLTLTSRTEEQTEAWQVYAQGRDMETTIKPASHPVGTTVEVANLFFNTPARRKFLRTDKTEFAHIDEVIRRIALTKFNTAFTLTHNGKIIRQYRPAEAINQQLKRVAAICGDDFVKNALRIDWKHDDLHLSGWVATPNFSRTQNDLSYCYINGRMVRDKVISHAIRQAYAQYLPTDAYPAFVLFIDLNPHDVDVNVHPTKHEVRFHQQRLIHDFIYEGISYALNNQEQLNWHTDQSAVENHEENTVREPQPNYSIRPNRAAAGQNSFAPKYYEKPQQNQPHFSNTPVLPNHVSTGYRDYRSDAPSKTEQRLYAELLRTLPPTAQKDISDTAQQNISDTAKIISTEIIECSSHLRTLSLIENRALLLQQNQDFFLLSLEKLQRLQWQLALQQIQIEQQPLLIPIVFRLTEAQFQAWQQYSDNFKKIGFEFIENQAQLRLTLNKVPNVLRTQNLQKCLMAMLTRDENSSPFLTALCAQLECKTFDALADALNLLSDTERLLTQTNRTAFTQLLKPVNWQPLLDEI.

This sequence belongs to the DNA mismatch repair MutL/HexB family.

In terms of biological role, this protein is involved in the repair of mismatches in DNA. It is required for dam-dependent methyl-directed DNA mismatch repair. May act as a 'molecular matchmaker', a protein that promotes the formation of a stable complex between two or more DNA-binding proteins in an ATP-dependent manner without itself being part of a final effector complex. The protein is DNA mismatch repair protein MutL of Haemophilus influenzae (strain 86-028NP).